Here is a 488-residue protein sequence, read N- to C-terminus: Cobyric acid synthase (488 aa).

In terms of domain architecture, GATase cobBQ-type spans 248–441; it reads VLRVVVPALP…VHGLFDTPAA (194 aa). Catalysis depends on Cys-328, which acts as the Nucleophile. Residue His-433 is part of the active site.

This sequence belongs to the CobB/CobQ family. CobQ subfamily.

It participates in cofactor biosynthesis; adenosylcobalamin biosynthesis. Its function is as follows. Catalyzes amidations at positions B, D, E, and G on adenosylcobyrinic A,C-diamide. NH(2) groups are provided by glutamine, and one molecule of ATP is hydrogenolyzed for each amidation. The polypeptide is Cobyric acid synthase (Burkholderia vietnamiensis (strain G4 / LMG 22486) (Burkholderia cepacia (strain R1808))).